Consider the following 24-residue polypeptide: Fibrinogen gamma chain (24 aa).

Heterohexamer; disulfide linked. Contains 2 sets of 3 non-identical chains (alpha, beta and gamma). The 2 heterotrimers are in head to head conformation with the N-termini in a small central domain. Post-translationally, conversion of fibrinogen to fibrin is triggered by thrombin, which cleaves fibrinopeptides A and B from alpha and beta chains, and thus exposes the N-terminal polymerization sites responsible for the formation of the soft clot. The soft clot is converted into the hard clot by factor XIIIA which catalyzes the epsilon-(gamma-glutamyl)lysine cross-linking between gamma chains (stronger) and between alpha chains (weaker) of different monomers.

Its subcellular location is the secreted. Together with fibrinogen alpha (FGA) and fibrinogen beta (FGB), polymerizes to form an insoluble fibrin matrix. Has a major function in hemostasis as one of the primary components of blood clots. In addition, functions during the early stages of wound repair to stabilize the lesion and guide cell migration during re-epithelialization. Was originally thought to be essential for platelet aggregation, based on in vitro studies using anticoagulated blood. However, subsequent studies have shown that it is not absolutely required for thrombus formation in vivo. Enhances expression of SELP in activated platelets via an ITGB3-dependent pathway. Maternal fibrinogen is essential for successful pregnancy. Fibrin deposition is also associated with infection, where it protects against IFNG-mediated hemorrhage. May also facilitate the antibacterial immune response via both innate and T-cell mediated pathways. The polypeptide is Fibrinogen gamma chain (FGG) (Canis lupus familiaris (Dog)).